The following is a 644-amino-acid chain: Sodium/hydrogen exchanger 9 (644 aa).

Topologically, residues 1 to 20 (MERQRRFMSEKDEYQFQHQG) are lumenal. The chain crosses the membrane as a helical span at residues 21–41 (AVELLVFNFLLILTILTIWLF). The Cytoplasmic segment spans residues 42–45 (KNHR). The chain crosses the membrane as a helical span at residues 46–66 (FRFLHETGGAMVYGLIMGLIL). The Lumenal portion of the chain corresponds to 67–126 (RYATAPTDIESGTVYDCGKLAFSPSTLLINITDQVYEYKYKREISQHNINPHLGNAILEK). Residues 127 to 147 (MTFDPEIFFNVLLPPIIFHAG) form a helical membrane-spanning segment. The Cytoplasmic segment spans residues 148 to 164 (YSLKKRHFFQNLGSILT). A helical transmembrane segment spans residues 165 to 185 (YAFLGTAISCIVIGLIMYGFV). At 186 to 203 (KAMVYAGQLKNGDFHFTD) the chain is on the lumenal side. Residues 204-224 (CLFFGSLMSATDPVTVLAIFH) form a helical membrane-spanning segment. Topologically, residues 225-235 (ELHVDPDLYTL) are cytoplasmic. The helical transmembrane segment at 236-256 (LFGESVLNDAVAIVLTYSISI) threads the bilayer. The Lumenal segment spans residues 257 to 277 (YSPKENPNAFDAAAFFQSVGN). Residues 278–298 (FLGIFAGSFAMGSAYAVVTAL) form a helical membrane-spanning segment. Residues 299 to 301 (LTK) are Cytoplasmic-facing. Transmembrane regions (helical) follow at residues 302–322 (FTKLCEFPMLETGLFFLLSWS) and 323–343 (AFLSAEAAGLTGIVAVLFCGV). The Cytoplasmic portion of the chain corresponds to 344-364 (TQAHYTYNNLSLDSKMRTKQL). Residues 365 to 385 (FEFMNFLAENVIFCYMGLALF) traverse the membrane as a helical segment. T386 is a topological domain (lumenal). The chain crosses the membrane as a helical span at residues 387 to 407 (FQNHIFNALFILGAFLAIFVA). The Cytoplasmic portion of the chain corresponds to 408 to 429 (RACNIYPLSFLLNLGRKHKIPW). The helical transmembrane segment at 430-450 (NFQHMMMFSGLRGAIAFALAI) threads the bilayer. Over 451–465 (RDTESQPKQMMFSTT) the chain is Lumenal. The helical transmembrane segment at 466 to 486 (LLLVFFTVWVFGGGTTPMLTW) threads the bilayer. The Cytoplasmic segment spans residues 487–644 (LQIRVGVDLD…EQTPGQSQLN (158 aa)). The disordered stretch occupies residues 593–622 (QAASPCSPPTRLGLDQKAAPQTPGKENIYE).

The protein belongs to the monovalent cation:proton antiporter 1 (CPA1) transporter (TC 2.A.36) family. As to quaternary structure, homodimer; phosphatidylinositol-4,5-bisphosphate (PIP2) and phosphatidylinositol 3,4,5-trisphosphate (PIP3) could be involved in the dimer stabilization. Interacts (via the C-terminus) with RACK1. Interacts with CHP1.

The protein resides in the late endosome membrane. It is found in the early endosome membrane. It localises to the recycling endosome membrane. Its subcellular location is the cell membrane. The protein localises to the cytoplasmic vesicle. The protein resides in the phagosome membrane. The catalysed reaction is Na(+)(in) + H(+)(out) = Na(+)(out) + H(+)(in). It carries out the reaction K(+)(in) + H(+)(out) = K(+)(out) + H(+)(in). Functionally, endosomal Na(+), K(+)/H(+) antiporter. Mediates the electroneutral exchange of endosomal luminal H(+) for a cytosolic Na(+) or K(+). By facilitating proton efflux, SLC9A9 counteracts the acidity generated by vacuolar (V)-ATPase, thereby limiting luminal acidification. Regulates organellar pH and consequently, endosome maturation and endocytic trafficking of plasma membrane receptors and neurotransporters. Promotes the recycling of transferrin receptors back to the cell surface to facilitate additional iron uptake in the brain. Regulates synaptic transmission by regulating the luminal pH of axonal endosomes. Regulates phagosome lumenal pH, thus affecting phagosome maturation, and consequently, microbicidal activity in macrophages. Can also be active at the cell surface of specialized cells, e.g., in the inner ear hair bundles uses the high K(+) of the endolymph to regulate intracelular pH. The polypeptide is Sodium/hydrogen exchanger 9 (SLC9A9) (Equus caballus (Horse)).